Consider the following 720-residue polypeptide: Calcium/calmodulin-dependent protein kinase type II (720 aa).

The 258-residue stretch at 12-269 (YDVKEELGKG…ADQALKVPWI (258 aa)) folds into the Protein kinase domain. ATP-binding positions include 18–26 (LGKGAFSVV) and lysine 41. Aspartate 134 acts as the Proton acceptor in catalysis. At threonine 284 the chain carries Phosphothreonine; by autocatalysis. 2 disordered regions span residues 317–345 (SDST…QPTS) and 504–586 (DNLS…NLSA). Composition is skewed to polar residues over residues 504 to 514 (DNLSASTSSDL) and 526 to 540 (PPST…SQTI). Low complexity predominate over residues 569 to 586 (SSSNSSTASKSSSTNLSA).

Belongs to the protein kinase superfamily. CAMK Ser/Thr protein kinase family. CaMK subfamily. As to quaternary structure, dodecamer. Subunits are tightly packed around a central ring-shaped scaffold with extensive contacts between the regulatory segment of one kinase and the catalytic domain of another enabling cooperative activation of a subunit by the adjacent molecule. Interacts with and phosphorylates daf-16; the interaction promotes daf-16 nuclear localization. Interacts with egl-2 and tir-1. Interacts with nsy-1. The cofactor is Mg(2+). In terms of tissue distribution, expressed in the nervous system. Observed in the ADF and AWC neurons. Position in AWC neurons is regulated by microtubules. Localized to clusters in ventral cord neurites which appear to be required for glr-1 trafficking. Also present in oocytes.

It is found in the cytoplasm. Its subcellular location is the cell projection. The protein localises to the axon. The protein resides in the perikaryon. It carries out the reaction L-seryl-[protein] + ATP = O-phospho-L-seryl-[protein] + ADP + H(+). It catalyses the reaction L-threonyl-[protein] + ATP = O-phospho-L-threonyl-[protein] + ADP + H(+). Its activity is regulated as follows. Ca2(+)/calmodulin binding removes an autoinhibitory regulatory segment located C-terminal to the kinase domain. This releases the catalytic activity of the enzyme and makes accessible a regulatory residue Thr-284. Phosphorylation of Thr-284 by another kinase domain within the oligomeric holoenzyme keeps CaMKII active in the absence of Ca(2+)/calmodulin by preventing the rebinding of the regulatory segment to the kinase domain and by increasing the affinity of calmodulin for the enzyme. Can respond to high-frequency Ca(2+) pulses to become Ca(2+) independent. Its function is as follows. Acts in the signaling of a variety of pathways and processes. Phosphorylates 'Ser-319' of daf-16 in response to stress signals, such as heat, starvation and oxidation, which plays a role in prolonging lifespan. Required for viability under chronic osmotic stress in which it acts downstream of osr-1. Has roles in locomotion, oocyte maturation, brood size, egg laying, defecation, meiotic maturation and neuronal cell fate specification. Required for the regulation of synaptic density and neuromuscular junction morphology. Regulates the synaptic trafficking of glr-1. Bidirectional modulator of neurotransmitter release with negative modulatory effects mainly mediated via slo-1 activation. Involved in activation of ADF neurons and increased tph-1 transcription following exposure to pathogenic bacteria which leads to learned olfactory aversion to the bacteria. Implicated in the muscle regulation of spicule protraction. In conjunction with egl-2 has a role in the suppression of mating behavior under food deprivation to encourage foraging. Involved in restricting str-2 expression to only one of the two AWC neurons. May suppress the functional response to an internal pacemaker, perhaps by modulating the activity of the IP3 receptor. This chain is Calcium/calmodulin-dependent protein kinase type II (unc-43), found in Caenorhabditis elegans.